A 903-amino-acid chain; its full sequence is DNA-directed DNA polymerase (903 aa).

The segment at 103 to 340 (YDHTKIRVAN…VLQIDAKRQF (238 aa)) is 3'-5'exonuclease. D114, E116, and D222 together coordinate Mg(2+). The segment at 248–264 (TRVKVIENMYGSREIIT) is beta hairpin. Mg(2+)-binding residues include D327, D411, and L412. Residues 380-903 (IPQGRSHPVQ…KASLFDMFDF (524 aa)) are polymerase. Substrate contacts are provided by residues 414-416 (SLY), R482, and K560. Residue D623 participates in Mg(2+) binding. Positions 705 to 708 (KKRY) are binding of DNA in B-conformation. The interval 897 to 903 (LFDMFDF) is interaction with the polymerase clamp.

The protein belongs to the DNA polymerase type-B family. Part of the replicase complex that includes the DNA polymerase, the polymerase clamp, the clamp loader complex, the single-stranded DNA binding protein, and the primase/helicase. Interacts with the polymerase clamp; this interaction constitutes the polymerase holoenzyme. The cofactor is Mg(2+).

The enzyme catalyses DNA(n) + a 2'-deoxyribonucleoside 5'-triphosphate = DNA(n+1) + diphosphate. Its function is as follows. Replicates the viral genomic DNA. This polymerase possesses two enzymatic activities: DNA synthesis (polymerase) and an exonucleolytic activity that degrades single-stranded DNA in the 3'- to 5'-direction for proofreading purpose. This is DNA-directed DNA polymerase (43) from Escherichia coli (Bacteriophage RB69).